The sequence spans 96 residues: Small ribosomal subunit protein bS6 (96 aa).

The protein belongs to the bacterial ribosomal protein bS6 family.

In terms of biological role, binds together with bS18 to 16S ribosomal RNA. This chain is Small ribosomal subunit protein bS6, found in Streptococcus uberis (strain ATCC BAA-854 / 0140J).